Consider the following 694-residue polypeptide: Glycine--tRNA ligase beta subunit (694 aa).

It belongs to the class-II aminoacyl-tRNA synthetase family. In terms of assembly, tetramer of two alpha and two beta subunits.

It localises to the cytoplasm. It carries out the reaction tRNA(Gly) + glycine + ATP = glycyl-tRNA(Gly) + AMP + diphosphate. The chain is Glycine--tRNA ligase beta subunit from Shewanella denitrificans (strain OS217 / ATCC BAA-1090 / DSM 15013).